Consider the following 221-residue polypeptide: Translation initiation factor 6 (221 aa).

It belongs to the eIF-6 family.

Functionally, binds to the 50S ribosomal subunit and prevents its association with the 30S ribosomal subunit to form the 70S initiation complex. The polypeptide is Translation initiation factor 6 (Methanocella arvoryzae (strain DSM 22066 / NBRC 105507 / MRE50)).